A 415-amino-acid polypeptide reads, in one-letter code: Gamma-glutamyl phosphate reductase (415 aa).

It belongs to the gamma-glutamyl phosphate reductase family.

It localises to the cytoplasm. It carries out the reaction L-glutamate 5-semialdehyde + phosphate + NADP(+) = L-glutamyl 5-phosphate + NADPH + H(+). It participates in amino-acid biosynthesis; L-proline biosynthesis; L-glutamate 5-semialdehyde from L-glutamate: step 2/2. In terms of biological role, catalyzes the NADPH-dependent reduction of L-glutamate 5-phosphate into L-glutamate 5-semialdehyde and phosphate. The product spontaneously undergoes cyclization to form 1-pyrroline-5-carboxylate. This is Gamma-glutamyl phosphate reductase from Listeria innocua serovar 6a (strain ATCC BAA-680 / CLIP 11262).